The chain runs to 351 residues: Mitogen-activated protein kinase 2 (351 aa).

The Protein kinase domain maps to 16–304; the sequence is YEILDVIGEG…AEEALQHNYL (289 aa). ATP is bound by residues 22–30 and Lys45; that span reads IGEGAYGIV. Asp140 acts as the Proton acceptor in catalysis. Thr176 carries the post-translational modification Phosphothreonine. The TXY signature appears at 176–178; sequence TEY. Position 178 is a phosphotyrosine (Tyr178).

Belongs to the protein kinase superfamily. CMGC Ser/Thr protein kinase family. MAP kinase subfamily. It depends on Mg(2+) as a cofactor. The cofactor is Mn(2+). Dually phosphorylated on Thr-176 and Tyr-178, which activates the enzyme.

It is found in the nucleus. It carries out the reaction L-seryl-[protein] + ATP = O-phospho-L-seryl-[protein] + ADP + H(+). The catalysed reaction is L-threonyl-[protein] + ATP = O-phospho-L-threonyl-[protein] + ADP + H(+). Its activity is regulated as follows. Activated by tyrosine and threonine phosphorylation. Inhibited by the MEK inhibitor U0126 but not by the p38 inhibitor SB203580. Cobalt abolishes kinase activity, while calcium, copper and nickel have little effect on kinase activity. Serine-threonine protein kinase which may be involved in pheromone signaling. Functionally complements the MAPK pheromone signaling pathway in S.cerevisiae. The sequence is that of Mitogen-activated protein kinase 2 from Pneumocystis carinii.